The following is a 161-amino-acid chain: Putative pre-16S rRNA nuclease (161 aa).

It belongs to the YqgF nuclease family.

It localises to the cytoplasm. Its function is as follows. Could be a nuclease involved in processing of the 5'-end of pre-16S rRNA. The sequence is that of Putative pre-16S rRNA nuclease from Bradyrhizobium sp. (strain BTAi1 / ATCC BAA-1182).